Here is a 348-residue protein sequence, read N- to C-terminus: MADIYRFPKFSYEDNGTVEPLPLRTGSDKKAIPYIRIIKVGDPPKHGVRYLDLLLLGFFETPKQTTNLGSVSDLTEPTSYSICGSGSLPIGVAKYYGTDQELLKACTDLRITVRRTVRAGEMIVYMVDSIGAPLLPWSGRLRQGMIFNANKVALAPQCLPVDKDIRFRVVFVNGTSLGAITIAKIPKTLADLALPNSISVNLLVTLKTGISTEQKGVLPVLDDQGEKKLNFMVHLGLIRRKVGKIYSVEYCKSKIERMRLIFSLGLIGGISFHVQVTGTLSKTFMSQLAWKRAVCFPLMDVNPHMNLVIWAASVEITGVDAVFQPAIPRDFRYYPNVVAKNIGRIRKL.

Positions 50–53 (YLDL) match the YLDL motif motif. S70 carries the post-translational modification Phosphoserine; by host.

This sequence belongs to the morbillivirus/respirovirus/rubulavirus M protein family. As to quaternary structure, homomultimer. Binds to the cytoplasmic regions of F and HN proteins. Interacts with nucleocapsid. Interacts with human alpha-tubulin and beta-tubulin. Interacts with host ANP32B. Post-translationally, a large portion is phosphorylated in the cytoplasm, but not in virion. However, this phosphorylation is not essential for virus replication.

The protein resides in the virion. It is found in the host cytoplasm. It localises to the host cell membrane. Acts as a negative regulator for transcription and replication by sticking to the nucleocapsid. This effect might be regulated by the cytoplasmic interaction with tubulin that dissociates the M protein from the nucleocapsid. Plays a crucial role in virion assembly and budding. Forms a shell at the inner face of the plasma membrane and concentrates the HN and F glycoproteins. The chain is Matrix protein (M) from Sendai virus (strain Harris) (SeV).